A 476-amino-acid polypeptide reads, in one-letter code: tRNA sulfurtransferase (476 aa).

A THUMP domain is found at 54-156 (AENDIPLSKV…GKDALIYDKI (103 aa)). ATP-binding positions include 174–175 (MV), lysine 256, glycine 278, and glutamine 287. A disulfide bond links cysteine 334 and cysteine 433. Residues 388–470 (NLEDAVFIDL…LSKQKGSVDE (83 aa)) enclose the Rhodanese domain. Cysteine 433 functions as the Cysteine persulfide intermediate in the catalytic mechanism.

This sequence belongs to the ThiI family.

Its subcellular location is the cytoplasm. The enzyme catalyses [ThiI sulfur-carrier protein]-S-sulfanyl-L-cysteine + a uridine in tRNA + 2 reduced [2Fe-2S]-[ferredoxin] + ATP + H(+) = [ThiI sulfur-carrier protein]-L-cysteine + a 4-thiouridine in tRNA + 2 oxidized [2Fe-2S]-[ferredoxin] + AMP + diphosphate. It catalyses the reaction [ThiS sulfur-carrier protein]-C-terminal Gly-Gly-AMP + S-sulfanyl-L-cysteinyl-[cysteine desulfurase] + AH2 = [ThiS sulfur-carrier protein]-C-terminal-Gly-aminoethanethioate + L-cysteinyl-[cysteine desulfurase] + A + AMP + 2 H(+). The protein operates within cofactor biosynthesis; thiamine diphosphate biosynthesis. Catalyzes the ATP-dependent transfer of a sulfur to tRNA to produce 4-thiouridine in position 8 of tRNAs, which functions as a near-UV photosensor. Also catalyzes the transfer of sulfur to the sulfur carrier protein ThiS, forming ThiS-thiocarboxylate. This is a step in the synthesis of thiazole, in the thiamine biosynthesis pathway. The sulfur is donated as persulfide by IscS. The polypeptide is tRNA sulfurtransferase (Thermoplasma volcanium (strain ATCC 51530 / DSM 4299 / JCM 9571 / NBRC 15438 / GSS1)).